An 805-amino-acid chain; its full sequence is Replication restart protein PriA (805 aa).

Positions 1–110 (MNFAEVIVDV…QAMLPAALKA (110 aa)) are 3'BD. Residues 111–166 (KYEKELKIAHGADLPPQVERLFSETKTLLYSDIPDHETLKLIQRHVQKGDIDVTYK) form a linker region. The segment at 167–253 (VAQKTNKKMV…KESYEEVYRD (87 aa)) is WH. The Helicase ATP-binding domain maps to 282-448 (TLDSDEHKVF…QKGVYELLSL (167 aa)). 295–302 (GVTGSGKT) provides a ligand contact to ATP. The DEAH box motif lies at 391-394 (DEEH). The Zn(2+) site is built by Cys-510, Cys-513, Cys-519, Cys-522, Cys-537, Cys-540, Cys-550, and Cys-553. The Helicase C-terminal domain occupies 545-699 (PVPHTCPECA…TFYQHEMAHR (155 aa)).

This sequence belongs to the helicase family. PriA subfamily. Monomer. Component of the replication restart primosome which assembles in this order; PriA, DnaD then DnaB. The preferred DNA substrate mimics an arrested DNA replication fork with unreplicated lagging strand. Interacts with DnaD but not DnaB. Interacts with SSB (sbbA) via the latter's 35 residue C-terminal tail which tethers PriA to ssDNA. Colocalizes with DNA pol III subunit gamma/tau (dnaX). May interact with RarA. It depends on Zn(2+) as a cofactor.

The protein localises to the cytoplasm. The protein resides in the nucleoid. It catalyses the reaction Couples ATP hydrolysis with the unwinding of duplex DNA by translocating in the 3'-5' direction.. The enzyme catalyses ATP + H2O = ADP + phosphate + H(+). In terms of biological role, initiates the restart of stalled replication forks, which reloads the replicative helicase on sites other than the origin of replication. Recognizes and binds to abandoned replication forks and remodels them to uncover a helicase loading site. Promotes assembly of the primosome at these replication forks. Serves as the initiating protein for assembly of the replication restart primosome; binding of PriA to an arrested DNA replication fork with unreplicated lagging strand triggers assembly. Sequentially DnaD (possibly as a dimer) and DnaB homotetramers bind. Assembly probably continues by loading of the DnaC replicative helicase aided by helicase loader DnaI. A single-strand (ss)DNA-dependent ATPase with helicase activity. Recognizes and binds the arrested nascent DNA chain at stalled replication forks. Binds forked DNA substrates and makes a larger complex with RarA; RarA has no effect on the helicase function. Binds ssDNA, D-loops and replication fork-like substrates but not double-stranded (ds)DNA; the preferred DNA substrate mimics an arrested DNA replication fork with an unreplicated lagging strand. Recognizes nicked dsDNA. A supershift on ssDNA occurs in the presence of single-stranded binding protein (SSB). Cannot substitute for E.coli PriA. Its function is as follows. Required for replication of plasmids that have a rolling circle mechanism, which produces circular single-stranded (ss)DNA intermediates corresponding to the lagging strand template, which are then converted into double-stranded (ds)DNA; priA is required to activate the conversion of ssDNA into dsDNA. The chain is Replication restart protein PriA from Bacillus subtilis (strain 168).